Reading from the N-terminus, the 660-residue chain is DNA mismatch repair protein MutL (660 aa).

The protein belongs to the DNA mismatch repair MutL/HexB family.

This protein is involved in the repair of mismatches in DNA. It is required for dam-dependent methyl-directed DNA mismatch repair. May act as a 'molecular matchmaker', a protein that promotes the formation of a stable complex between two or more DNA-binding proteins in an ATP-dependent manner without itself being part of a final effector complex. The sequence is that of DNA mismatch repair protein MutL from Solibacter usitatus (strain Ellin6076).